We begin with the raw amino-acid sequence, 397 residues long: MKKLLKSVLVFAALSSASSLQALPVGNPAEPSLMIDGILWEGFGGDPCDPCATWCDAISMRVGYYGDFVFDRVLKTDVNKEFQMGAAPTTNDAADLQNDPKTNVARPNPAYGKHMQDAEMFTNAAYMALNIWDRFDVFCTLGATTGYLKGNSASFNLVGLFGTKTKSSDFNTAKLVPNIALNRAVVELYTDTTFAWSVGARAALWECGCATLGASFQYAQSKPKVEELNVLCNASEFTINKPKGYVGAEFPLDITAGTEAATGTKDASIDYHEWQASLALSYRLNMFTPYIGVKWSRVSFDADTIRIAQPKLAEAILDVTTLNPTIAGKGTVVASGSDNDLADTMQIVSLQLNKMKSRKSCGIAVGTTIVDADKYAVTVETRLIDERAAHVNAQFRF.

The signal sequence occupies residues 1–22; sequence MKKLLKSVLVFAALSSASSLQA.

This sequence belongs to the chlamydial porin (CP) (TC 1.B.2) family. Part of a disulfide cross-linked outer membrane complex (COMC) composed of the major outer membrane porin (MOMP), the small cysteine-rich protein (OmcA) and the large cysteine-rich periplasmic protein (OmcB).

It localises to the cell outer membrane. In elementary bodies (EBs, the infectious stage, which is able to survive outside the host cell) provides the structural integrity of the outer envelope through disulfide cross-links with the small cysteine-rich protein and the large cysteine-rich periplasmic protein. It has been described in publications as the Sarkosyl-insoluble COMC (Chlamydia outer membrane complex), and serves as the functional equivalent of peptidoglycan. In terms of biological role, permits diffusion of specific solutes through the outer membrane. This chain is Major outer membrane porin, serovar H (ompA), found in Chlamydia trachomatis.